The following is a 37-amino-acid chain: Alpha-conotoxin LvIA (37 aa).

The propeptide occupies 1–20 (FRGRDAAAKASGLVGLTDRR). 2 cysteine pairs are disulfide-bonded: Cys22–Cys28 and Cys23–Cys36. A ser-Xaa-Pro motif, crucial for potent interaction with nAChR region spans residues 24-26 (SHP). Cys36 bears the Cysteine amide mark.

The protein belongs to the conotoxin A superfamily. As to expression, expressed by the venom duct.

The protein localises to the secreted. Its function is as follows. Alpha-conotoxins act on postsynaptic membranes, they bind to the nicotinic acetylcholine receptors (nAChR) and thus inhibit them. This toxin blocks alpha-3-beta-2/CHRNA3-CHRNB2 nAChR with high selectivity (IC(50)=8.67 nM (on rat) and 17.5 (on human)). Also has weaker activity on alpha-6/alpha-3-beta-2-beta-3 (CHRNA6/CHRNA3-CHRNB2-CHRNB3) (IC(50)=108 nM (on rat)), alpha-6/alpha-3-beta-4 (CHRNA6/CHRNA3-CHRNB4) (IC(50)=121 nM (on rat)), alpha-3-beta-4 (CHRNA3-CHRNB4) (IC(50)=148 nM (on rat)), and alpha-7/CHRNA7 nAChRs (IC(50)=3000 nM (on rat)). When tested on mouse with hot-plate tests, this toxin significantly increases the base pain threshold and shows analgesic effects. The polypeptide is Alpha-conotoxin LvIA (Conus lividus (Livid cone)).